Here is a 1368-residue protein sequence, read N- to C-terminus: DNA-directed RNA polymerase subunit beta (1368 aa).

Belongs to the RNA polymerase beta chain family. In terms of assembly, the RNAP catalytic core consists of 2 alpha, 1 beta, 1 beta' and 1 omega subunit. When a sigma factor is associated with the core the holoenzyme is formed, which can initiate transcription.

The catalysed reaction is RNA(n) + a ribonucleoside 5'-triphosphate = RNA(n+1) + diphosphate. Functionally, DNA-dependent RNA polymerase catalyzes the transcription of DNA into RNA using the four ribonucleoside triphosphates as substrates. This Paraburkholderia phymatum (strain DSM 17167 / CIP 108236 / LMG 21445 / STM815) (Burkholderia phymatum) protein is DNA-directed RNA polymerase subunit beta.